The sequence spans 397 residues: F-box protein At5g25290 (397 aa).

An F-box domain is found at 11–56 (VTLWSEIPMDILRSVFERLSFVDLHRAKIVCSHWYSCSKQSFLRKT).

The polypeptide is F-box protein At5g25290 (Arabidopsis thaliana (Mouse-ear cress)).